A 210-amino-acid polypeptide reads, in one-letter code: Oxygen-insensitive NADPH nitroreductase (210 aa).

150 to 155 (GVSLMG) contributes to the NADP(+) binding site.

This sequence belongs to the nitroreductase family.

Functionally, reduction of a variety of nitroaromatic compounds using NADPH as source of reducing equivalents; two electrons are transferred. This is Oxygen-insensitive NADPH nitroreductase (rdxA) from Helicobacter pylori (strain J99 / ATCC 700824) (Campylobacter pylori J99).